A 128-amino-acid chain; its full sequence is Glycophorin-C (128 aa).

Positions 1–12 (MWSTRSPNSTAW) are enriched in polar residues. Residues 1–48 (MWSTRSPNSTAWPLSLEPDPGMASASTTMHTTTIAEPDPGMSGWPDGR) form a disordered region. Residues 1-57 (MWSTRSPNSTAWPLSLEPDPGMASASTTMHTTTIAEPDPGMSGWPDGRMETSTPTIM) lie on the Extracellular side of the membrane. An O-linked (GalNAc...) serine glycan is attached at Ser3. Thr4 carries an O-linked (GalNAc...) threonine glycan. The O-linked (GalNAc...) serine glycan is linked to Ser6. N-linked (GlcNAc...) asparagine glycosylation is present at Asn8. A glycan (O-linked (GalNAc...) serine) is linked at Ser9. An O-linked (GalNAc...) threonine glycan is attached at Thr10. Residues Ser15, Ser24, and Ser26 are each glycosylated (O-linked (GalNAc...) serine). The segment covering 22-33 (MASASTTMHTTT) has biased composition (low complexity). O-linked (GalNAc...) threonine glycans are attached at residues Thr27, Thr28, Thr31, Thr32, and Thr33. O-linked (GalNAc...) serine glycosylation occurs at Ser42. A helical; Signal-anchor for type III membrane protein membrane pass occupies residues 58-81 (DIVVIAGVIAAVAIVLVSLLFVML). Over 82–128 (RYMYRHKGTYHTNEAKGTEFAESADAALQGDPALQDAGDSSRKEYFI) the chain is Cytoplasmic. A phosphoserine mark is found at Ser104 and Ser122. Positions 108–128 (ALQGDPALQDAGDSSRKEYFI) are disordered.

This sequence belongs to the glycophorin-C family. O-glycosylated with core 1 or possibly core 8 glycans. In terms of tissue distribution, glycophorin-C is expressed in erythrocytes. Glycophorin-D and IsoGPC are ubiquitously expressed.

It is found in the cell membrane. Its function is as follows. This protein is a minor sialoglycoprotein in human erythrocyte membranes. The blood group Gerbich antigens and receptors for Plasmodium falciparum merozoites are most likely located within the extracellular domain. Glycophorin-C plays an important role in regulating the stability of red cells. In Homo sapiens (Human), this protein is Glycophorin-C (GYPC).